A 326-amino-acid chain; its full sequence is Malate dehydrogenase (326 aa).

11 to 17 is a binding site for NAD(+); the sequence is GAAGQIG. Substrate-binding residues include R92 and R98. Residues N105, Q112, and 129–131 each bind NAD(+); that span reads VGN. N131 and R162 together coordinate substrate. H187 serves as the catalytic Proton acceptor.

It belongs to the LDH/MDH superfamily. MDH type 2 family.

The catalysed reaction is (S)-malate + NAD(+) = oxaloacetate + NADH + H(+). Functionally, catalyzes the reversible oxidation of malate to oxaloacetate. The protein is Malate dehydrogenase of Leptospira borgpetersenii serovar Hardjo-bovis (strain JB197).